The primary structure comprises 513 residues: ATP synthase subunit alpha (513 aa).

Position 169–176 (169–176) interacts with ATP; it reads GDRQTGKT.

Belongs to the ATPase alpha/beta chains family. As to quaternary structure, F-type ATPases have 2 components, CF(1) - the catalytic core - and CF(0) - the membrane proton channel. CF(1) has five subunits: alpha(3), beta(3), gamma(1), delta(1), epsilon(1). CF(0) has three main subunits: a(1), b(2) and c(9-12). The alpha and beta chains form an alternating ring which encloses part of the gamma chain. CF(1) is attached to CF(0) by a central stalk formed by the gamma and epsilon chains, while a peripheral stalk is formed by the delta and b chains.

It is found in the cell inner membrane. It catalyses the reaction ATP + H2O + 4 H(+)(in) = ADP + phosphate + 5 H(+)(out). Functionally, produces ATP from ADP in the presence of a proton gradient across the membrane. The alpha chain is a regulatory subunit. This chain is ATP synthase subunit alpha, found in Aliivibrio fischeri (strain ATCC 700601 / ES114) (Vibrio fischeri).